Consider the following 153-residue polypeptide: Arginine repressor (153 aa).

It belongs to the ArgR family.

Its subcellular location is the cytoplasm. It participates in amino-acid biosynthesis; L-arginine biosynthesis [regulation]. Its function is as follows. Regulates arginine biosynthesis genes. The sequence is that of Arginine repressor from Actinobacillus pleuropneumoniae serotype 3 (strain JL03).